The primary structure comprises 726 residues: DNA-directed RNA polymerase subunit beta N-terminal section (726 aa).

The protein belongs to the RNA polymerase beta chain family. As to quaternary structure, in plastids the minimal PEP RNA polymerase catalytic core is composed of four subunits: alpha, beta, beta', and beta''. When a (nuclear-encoded) sigma factor is associated with the core the holoenzyme is formed, which can initiate transcription.

Its subcellular location is the plastid. The protein resides in the chloroplast. The enzyme catalyses RNA(n) + a ribonucleoside 5'-triphosphate = RNA(n+1) + diphosphate. Its function is as follows. DNA-dependent RNA polymerase catalyzes the transcription of DNA into RNA using the four ribonucleoside triphosphates as substrates. This is DNA-directed RNA polymerase subunit beta N-terminal section (rpoB1) from Tetradesmus obliquus (Green alga).